The following is a 333-amino-acid chain: MVSSTPEMLQGGLTREQIVPSRKRIKLPAWLEIAKPRLIPLLLATTLGGMALSEGWPLPSLRLACTLGGGALAAAAAGVLNCIWEQDLDGRMQRTSGRALPSGRLSPTAAFIGAISCTLAAAALLVSGVNCLAAGLSLLGLCSYVLLYTAILKPRTPQNIVIGGVAGAIPPLVGAAAASGHVGLSGWWLFALVMLWTPAHFWALALLLRDDYRAVGIPMLPVVKGPVVTVRAISRYGWATVLLSGFGVWALPEGGLLYGLLLIPFNARLLQMVHQLGAAPENVDRAKGLFRWSIFYMFGICLLLVVSRLPMAANFDLQAWSLLQQMASSGQFI.

7 consecutive transmembrane segments (helical) span residues 63–83, 109–129, 132–152, 160–180, 188–208, 245–265, and 292–312; these read LACTLGGGALAAAAAGVLNCI, AAFIGAISCTLAAAALLVSGV, LAAGLSLLGLCSYVLLYTAIL, IVIGGVAGAIPPLVGAAAASG, WLFALVMLWTPAHFWALALLL, GFGVWALPEGGLLYGLLLIPF, and WSIFYMFGICLLLVVSRLPMA.

The protein belongs to the UbiA prenyltransferase family. Protoheme IX farnesyltransferase subfamily.

It localises to the cell inner membrane. It carries out the reaction heme b + (2E,6E)-farnesyl diphosphate + H2O = Fe(II)-heme o + diphosphate. It participates in porphyrin-containing compound metabolism; heme O biosynthesis; heme O from protoheme: step 1/1. Functionally, converts heme B (protoheme IX) to heme O by substitution of the vinyl group on carbon 2 of heme B porphyrin ring with a hydroxyethyl farnesyl side group. This chain is Protoheme IX farnesyltransferase, found in Prochlorococcus marinus (strain MIT 9303).